The chain runs to 99 residues: Aspartyl/glutamyl-tRNA(Asn/Gln) amidotransferase subunit C (99 aa).

Belongs to the GatC family. Heterotrimer of A, B and C subunits.

The catalysed reaction is L-glutamyl-tRNA(Gln) + L-glutamine + ATP + H2O = L-glutaminyl-tRNA(Gln) + L-glutamate + ADP + phosphate + H(+). The enzyme catalyses L-aspartyl-tRNA(Asn) + L-glutamine + ATP + H2O = L-asparaginyl-tRNA(Asn) + L-glutamate + ADP + phosphate + 2 H(+). Its function is as follows. Allows the formation of correctly charged Asn-tRNA(Asn) or Gln-tRNA(Gln) through the transamidation of misacylated Asp-tRNA(Asn) or Glu-tRNA(Gln) in organisms which lack either or both of asparaginyl-tRNA or glutaminyl-tRNA synthetases. The reaction takes place in the presence of glutamine and ATP through an activated phospho-Asp-tRNA(Asn) or phospho-Glu-tRNA(Gln). This is Aspartyl/glutamyl-tRNA(Asn/Gln) amidotransferase subunit C from Corynebacterium diphtheriae (strain ATCC 700971 / NCTC 13129 / Biotype gravis).